Reading from the N-terminus, the 373-residue chain is tRNA-specific 2-thiouridylase MnmA (373 aa).

ATP contacts are provided by residues 12 to 19 (GMSGGVDS) and Met-38. Positions 98 to 100 (NPD) are interaction with target base in tRNA. Cys-103 acts as the Nucleophile in catalysis. Residues Cys-103 and Cys-200 are joined by a disulfide bond. Position 127 (Gly-127) interacts with ATP. Residues 150 to 152 (KDQ) form an interaction with tRNA region. Catalysis depends on Cys-200, which acts as the Cysteine persulfide intermediate. The segment at 312-313 (RY) is interaction with tRNA.

This sequence belongs to the MnmA/TRMU family.

The protein localises to the cytoplasm. It carries out the reaction S-sulfanyl-L-cysteinyl-[protein] + uridine(34) in tRNA + AH2 + ATP = 2-thiouridine(34) in tRNA + L-cysteinyl-[protein] + A + AMP + diphosphate + H(+). Catalyzes the 2-thiolation of uridine at the wobble position (U34) of tRNA, leading to the formation of s(2)U34. This is tRNA-specific 2-thiouridylase MnmA from Streptococcus pneumoniae (strain P1031).